The following is a 184-amino-acid chain: Probable archaeosortase E (184 aa).

4 consecutive transmembrane segments (helical) span residues 27–47 (ILFL…LSYF), 86–106 (VVEE…IIVY), 114–134 (IIGI…IVLI), and 151–171 (IAGY…YLKI). The Acyl-thioester intermediate role is filled by Cys-90. Arg-130 (proton donor) is an active-site residue.

The protein belongs to the exosortase/archaeosortase family. Archaeosortase E subfamily.

The protein localises to the cell membrane. Functionally, transpeptidase that recognizes and modifies its substrate by proteolytic cleavage of a sorting signal. Following cleavage, a covalent intermediate is formed via a thioester bond between the archaeosortase and its substrate, which is then transferred and covalently attached to the cell membrane. The protein is Probable archaeosortase E of Methanocaldococcus jannaschii (strain ATCC 43067 / DSM 2661 / JAL-1 / JCM 10045 / NBRC 100440) (Methanococcus jannaschii).